The primary structure comprises 89 residues: Strongylocin 2 (89 aa).

Residues 1–22 form the signal peptide; it reads MNIRTASFTFIVVMMILSQTMA. Positions 23–38 are excised as a propeptide; that stretch reads DRFFNEPEEDDHLVES. Trp-39 is modified (6'-bromotryptophan).

In terms of processing, contains 3 disulfide bonds.

Its function is as follows. Has antimicrobial activity against Gram-negative bacteria and Gram-positive bacteria with minimum inhibitory concentration (MIC) between 0.78 uM and 3.13 uM. The polypeptide is Strongylocin 2 (Echinus esculentus (Sea urchin)).